Reading from the N-terminus, the 261-residue chain is Shikimate dehydrogenase (NADP(+)) (261 aa).

Shikimate-binding positions include 13–15 (SLS) and Thr60. The active-site Proton acceptor is the Lys64. Asn85 and Asp100 together coordinate shikimate. NADP(+)-binding positions include 121-125 (GAGGA) and Ile202. Tyr204 contributes to the shikimate binding site. Gly225 contributes to the NADP(+) binding site.

Belongs to the shikimate dehydrogenase family. Homodimer.

The enzyme catalyses shikimate + NADP(+) = 3-dehydroshikimate + NADPH + H(+). Its pathway is metabolic intermediate biosynthesis; chorismate biosynthesis; chorismate from D-erythrose 4-phosphate and phosphoenolpyruvate: step 4/7. In terms of biological role, involved in the biosynthesis of the chorismate, which leads to the biosynthesis of aromatic amino acids. Catalyzes the reversible NADPH linked reduction of 3-dehydroshikimate (DHSA) to yield shikimate (SA). The protein is Shikimate dehydrogenase (NADP(+)) of Exiguobacterium sibiricum (strain DSM 17290 / CCUG 55495 / CIP 109462 / JCM 13490 / 255-15).